The primary structure comprises 545 residues: Glucose-6-phosphate isomerase (545 aa).

The Proton donor role is filled by Glu-351. Active-site residues include His-382 and Lys-510.

It belongs to the GPI family.

It localises to the cytoplasm. It catalyses the reaction alpha-D-glucose 6-phosphate = beta-D-fructose 6-phosphate. It functions in the pathway carbohydrate biosynthesis; gluconeogenesis. It participates in carbohydrate degradation; glycolysis; D-glyceraldehyde 3-phosphate and glycerone phosphate from D-glucose: step 2/4. Functionally, catalyzes the reversible isomerization of glucose-6-phosphate to fructose-6-phosphate. This is Glucose-6-phosphate isomerase from Shewanella pealeana (strain ATCC 700345 / ANG-SQ1).